Consider the following 277-residue polypeptide: Undecaprenyl-diphosphatase (277 aa).

The next 7 membrane-spanning stretches (helical) occupy residues 5–25 (WTAAQALILGVVEGLTEFLPI), 44–64 (RAMAFNIIIQLGAILAVVWEF), 86–106 (LNLLIAFMPAVVLGVIFADTI), 110–130 (LFNAITVATALVVGGVIMLWA), 184–204 (AATEFSFFLAMPTMVGAAVYS), 219–239 (VFAIGFITSFIFAMIAVRALL), and 255–275 (IAFGLLILATWQFGWIDWASA).

Belongs to the UppP family.

The protein resides in the cell inner membrane. The catalysed reaction is di-trans,octa-cis-undecaprenyl diphosphate + H2O = di-trans,octa-cis-undecaprenyl phosphate + phosphate + H(+). Catalyzes the dephosphorylation of undecaprenyl diphosphate (UPP). Confers resistance to bacitracin. This chain is Undecaprenyl-diphosphatase, found in Pseudomonas savastanoi pv. phaseolicola (strain 1448A / Race 6) (Pseudomonas syringae pv. phaseolicola (strain 1448A / Race 6)).